Reading from the N-terminus, the 86-residue chain is Small ribosomal subunit protein uS17 (86 aa).

The protein belongs to the universal ribosomal protein uS17 family. Part of the 30S ribosomal subunit.

In terms of biological role, one of the primary rRNA binding proteins, it binds specifically to the 5'-end of 16S ribosomal RNA. The protein is Small ribosomal subunit protein uS17 of Lactococcus lactis subsp. cremoris (strain MG1363).